The primary structure comprises 354 residues: UDP-2,3-diacetamido-2,3-dideoxy-D-glucuronate 2-epimerase (354 aa).

Belongs to the UDP-N-acetylglucosamine 2-epimerase family.

It catalyses the reaction UDP-2,3-diacetamido-2,3-dideoxy-alpha-D-glucuronate = UDP-2,3-diacetamido-2,3-dideoxy-alpha-D-mannuronate. It participates in bacterial outer membrane biogenesis; LPS O-antigen biosynthesis. Its function is as follows. Plays a role in the biosynthesis of B-band O antigen for serotype O5. Catalyzes the epimerization of UDP-2,3-diacetamido-2,3-dideoxy-alpha-D-glucuronic acid (UDP-alpha-D-GlcNAc3NAcA) to UDP-2,3-diacetamido-2,3-dideoxy-alpha-D-mannuronic acid (UDP-alpha-D-ManNAc3NAcA). Exhibits high specificity towards the substrate as UDP-alpha-D-GlcNAc, UDP-alpha-D-GlcNAcA (UDP-2-acetamido-2-deoxy-alpha-D-glucuronic acid) and UDP-alpha-D-GlcNAc3NAc (UDP-2,3-diacetamido-2,3-dideoxy-alpha-D-glucose) cannot act as substrates. In Pseudomonas aeruginosa (strain ATCC 15692 / DSM 22644 / CIP 104116 / JCM 14847 / LMG 12228 / 1C / PRS 101 / PAO1), this protein is UDP-2,3-diacetamido-2,3-dideoxy-D-glucuronate 2-epimerase.